The primary structure comprises 506 residues: Phase 2 flagellin (506 aa).

This sequence belongs to the bacterial flagellin family.

It is found in the secreted. Its subcellular location is the bacterial flagellum. Its function is as follows. Flagellin is the subunit protein which polymerizes to form the filaments of bacterial flagella. The polypeptide is Phase 2 flagellin (fljB) (Salmonella typhimurium (strain LT2 / SGSC1412 / ATCC 700720)).